A 1287-amino-acid polypeptide reads, in one-letter code: FYVE zinc finger domain protein UPA1 (1287 aa).

Residues 1 to 298 (MTIPDPANII…SSTSLSAPAE (298 aa)) form a disordered region. Positions 86–99 (DSSSFGSKPSSSAS) are enriched in low complexity. The span at 115-136 (WATSSTTSHPSKASQSTLSPNA) shows a compositional bias: polar residues. The PAM2 signature appears at 128–144 (SQSTLSPNASVFKPSRS). 2 stretches are compositionally biased toward basic and acidic residues: residues 177–187 (RPDHAPLDHEQ) and 201–211 (KVEEQRGDHSI). Residues 212–235 (PHQNGLVSAQAQTASDAVSTSKYT) show a composition bias toward polar residues. The PAM2L 1 motif lies at 239 to 253 (ADQEEDQDDFVYPGA). The segment covering 255 to 294 (SPSSGQAAVQDEQQAVTDSQTTKSLTKQESDPEASSTSLS) has biased composition (polar residues). 4 ANK repeats span residues 366 to 395 (NGLV…AIVE), 400 to 429 (EGET…DANA), 433 to 463 (DGWT…QIDV), and 468 to 497 (GAWT…ADPF). Disordered regions lie at residues 582–630 (NGGK…VGLP), 643–697 (RVGP…ASAQ), 934–960 (REAA…YPNS), and 977–1005 (TSGT…APSE). Over residues 674–695 (STPTPESVLQARRGTSSVNGAS) the composition is skewed to polar residues. A compositionally biased stretch (acidic residues) spans 938–955 (GLDEDEDEDAADDDDDEF). Residues 941–960 (EDEDEDAADDDDDEFIYPNS) carry the PAM2L 2 motif. The span at 981-995 (LSRPSLSQRQSSAAS) shows a compositional bias: low complexity. An FYVE-type zinc finger spans residues 1055–1129 (DEEAKDCIGC…VCNGCHAELQ (75 aa)). Zn(2+) contacts are provided by Cys-1061, Cys-1064, Cys-1077, Cys-1080, Cys-1085, Cys-1088, Cys-1121, and Cys-1124. Residues 1243-1283 (CSICMEDFVANSTIARLPCLCYFHRGCIDSWFKRGRECPVH) form an RING-type; atypical zinc finger.

Belongs to the UPA1 PAM2 domain-binding protein family. As to quaternary structure, part of large ribonucleoprotein complexes (mRNPs) containing RNA-binding proteins RRM4 and PAB1, endosome-binding protein UPA1, core scaffold protein UPA2 and associated factor GRP1. Interacts (via PAM2 motif) with PAB1 (via PABC domain). Interacts (via PAM2L motifs) with RRM4.

Its subcellular location is the cytoplasm. It is found in the cytoskeleton. It localises to the endosome. Functionally, FYVE zinc finger domain protein that functions in endosomal targeting and transport of mRNAs, as well as associated ribosomes. The endosomal mRNA transport regulates polarity of the infectious hyphae by transporting a broad spectrum of cargo mRNAs from the nucleus to cell poles. Involved in chitinase CTS1 secretion. Dispensable for general endosomal functions but crucial for endosomal recruitment of RRM4. The chain is FYVE zinc finger domain protein UPA1 from Mycosarcoma maydis (Corn smut fungus).